We begin with the raw amino-acid sequence, 269 residues long: Formamidopyrimidine-DNA glycosylase (269 aa).

Proline 2 serves as the catalytic Schiff-base intermediate with DNA. Glutamate 3 (proton donor) is an active-site residue. The active-site Proton donor; for beta-elimination activity is the lysine 57. DNA contacts are provided by histidine 90, arginine 109, and lysine 150. Residues 235 to 269 (QVYGRKGEPCRVCGTPIVATKHAQRATFYCRHCQK) form an FPG-type zinc finger. Arginine 259 serves as the catalytic Proton donor; for delta-elimination activity.

This sequence belongs to the FPG family. In terms of assembly, monomer. Requires Zn(2+) as cofactor.

It carries out the reaction Hydrolysis of DNA containing ring-opened 7-methylguanine residues, releasing 2,6-diamino-4-hydroxy-5-(N-methyl)formamidopyrimidine.. The catalysed reaction is 2'-deoxyribonucleotide-(2'-deoxyribose 5'-phosphate)-2'-deoxyribonucleotide-DNA = a 3'-end 2'-deoxyribonucleotide-(2,3-dehydro-2,3-deoxyribose 5'-phosphate)-DNA + a 5'-end 5'-phospho-2'-deoxyribonucleoside-DNA + H(+). Functionally, involved in base excision repair of DNA damaged by oxidation or by mutagenic agents. Acts as a DNA glycosylase that recognizes and removes damaged bases. Has a preference for oxidized purines, such as 7,8-dihydro-8-oxoguanine (8-oxoG). Has AP (apurinic/apyrimidinic) lyase activity and introduces nicks in the DNA strand. Cleaves the DNA backbone by beta-delta elimination to generate a single-strand break at the site of the removed base with both 3'- and 5'-phosphates. The polypeptide is Formamidopyrimidine-DNA glycosylase (Salmonella enteritidis PT4 (strain P125109)).